The chain runs to 255 residues: Aquaporin TIP4-1 (255 aa).

A run of 2 helical transmembrane segments spans residues 25–45 (AVLA…SAAM) and 61–81 (TLAA…TAGF). Residues 89–91 (NPA) carry the NPA 1 motif. Helical transmembrane passes span 108 to 128 (VLYV…LRFL), 148 to 168 (GLVM…AMIL), and 176 to 196 (AIGP…GGNF). The NPA 2 motif lies at 202–204 (NPA). A helical membrane pass occupies residues 223–243 (WIGPLLGGPLAGFVYESLFLV).

The protein belongs to the MIP/aquaporin (TC 1.A.8) family. TIP (TC 1.A.8.10) subfamily.

It is found in the vacuole membrane. Aquaporins facilitate the transport of water and small neutral solutes across cell membranes. The polypeptide is Aquaporin TIP4-1 (TIP4-1) (Zea mays (Maize)).